Reading from the N-terminus, the 338-residue chain is NAC domain-containing protein 46 (338 aa).

An NAC domain is found at 20–171 (LPPGFRFHPT…EWVVCRVFHK (152 aa)). Residues 118–177 (VGMKKTLVFYTGRAPKGEKTNWVMHEYRLDGKYSYHNLPKTARDEWVVCRVFHKNAPSTT) mediate DNA binding.

In terms of assembly, interacts with RCD1.

It is found in the nucleus. Functionally, transcriptional activator that acts as a positive regulator of leaf senescence. Activates NYC1, SGR1, SGR2 and PAO, which are genes involved in chlorophyll catabolic processes. Activates senescence-associated genes, such as RNS1, SAG12 and SAG13. This chain is NAC domain-containing protein 46, found in Arabidopsis thaliana (Mouse-ear cress).